Here is a 260-residue protein sequence, read N- to C-terminus: Glutathione S-transferase domain-containing protein DDB_G0280881 (260 aa).

Positions 7–96 (KVDFIFYTNG…YLAQKYNTFL (90 aa)) constitute a GST N-terminal domain. Residues 102 to 228 (NPKENSDVIT…QQISEGFKNF (127 aa)) enclose the GST C-terminal domain.

Belongs to the GST superfamily.

In Dictyostelium discoideum (Social amoeba), this protein is Glutathione S-transferase domain-containing protein DDB_G0280881.